The sequence spans 512 residues: Cytochrome P450 monooxygenase astB (512 aa).

Residues 5 to 25 (DLSFPAAIGAVFGAVAISVAA) traverse the membrane as a helical segment. Cysteine 452 is a heme binding site.

It belongs to the cytochrome P450 family. Requires heme as cofactor.

It is found in the membrane. It participates in secondary metabolite biosynthesis; terpenoid biosynthesis. In terms of biological role, cytochrome P450 monooxygenase; part of the gene cluster that mediates the biosynthesis of the sesquiterpenoid aspterric acid (AA), an inhibitor of dihydroxy-acid dehydratase (DHAD) effective as an herbicide. AstB catalyzes the second step within the pathway and converts (-)-daucane produced by the terpene cyclase astA into an alpha-epoxy carboxylate intermediate which is further converted into the tricyclic aspterric acid by the cytochrome P450 monooxygenase astC. This is Cytochrome P450 monooxygenase astB from Aspergillus terreus (strain NIH 2624 / FGSC A1156).